We begin with the raw amino-acid sequence, 622 residues long: DNA mismatch repair protein MutL (622 aa).

Basic and acidic residues predominate over residues 399–414; it reads SSQNFHPDENDYRAEE. Residues 399–422 form a disordered region; the sequence is SSQNFHPDENDYRAEEASPAEENP.

This sequence belongs to the DNA mismatch repair MutL/HexB family.

Functionally, this protein is involved in the repair of mismatches in DNA. It is required for dam-dependent methyl-directed DNA mismatch repair. May act as a 'molecular matchmaker', a protein that promotes the formation of a stable complex between two or more DNA-binding proteins in an ATP-dependent manner without itself being part of a final effector complex. The sequence is that of DNA mismatch repair protein MutL from Phocaeicola vulgatus (strain ATCC 8482 / DSM 1447 / JCM 5826 / CCUG 4940 / NBRC 14291 / NCTC 11154) (Bacteroides vulgatus).